The primary structure comprises 945 residues: LPS-assembly protein LptD (945 aa).

The N-terminal stretch at 1-33 is a signal peptide; sequence MALKSPAFRKKFPLLVTGSLLALQPLATSFVVA. The interval 56–98 is disordered; the sequence is AQLPPRPVHDANSVSSSVATAADATGEEASGDKSKLVTEAKGR. A compositionally biased stretch (low complexity) spans 65-79; that stretch reads DANSVSSSVATAADA. Residues 85 to 98 are compositionally biased toward basic and acidic residues; sequence SGDKSKLVTEAKGR.

It belongs to the LptD family. As to quaternary structure, component of the lipopolysaccharide transport and assembly complex. Interacts with LptE and LptA.

The protein localises to the cell outer membrane. Together with LptE, is involved in the assembly of lipopolysaccharide (LPS) at the surface of the outer membrane. The protein is LPS-assembly protein LptD of Pseudomonas fluorescens (strain ATCC BAA-477 / NRRL B-23932 / Pf-5).